Reading from the N-terminus, the 881-residue chain is DNA replication helicase (881 aa).

Residues 1–26 are disordered; sequence MAASGGEGSRDVRAPGPPPQQPGARP. 96 to 103 serves as a coordination point for ATP; it reads GNAGSGKS.

Belongs to the herpesviridae helicase family. In terms of assembly, associates with the primase and the primase-associated factor to form the helicase-primase complex.

The protein resides in the host nucleus. Component of the helicase/primase complex. Unwinds the DNA at the replication forks and generates single-stranded DNA for both leading and lagging strand synthesis. The primase synthesizes short RNA primers on the lagging strand that the polymerase elongates using dNTPs. Possesses helicase-like motifs and therefore may act as the helicase subunit of the complex. This chain is DNA replication helicase, found in Human herpesvirus 2 (strain HG52) (HHV-2).